A 182-amino-acid chain; its full sequence is ATP synthase subunit delta (182 aa).

This sequence belongs to the ATPase delta chain family. In terms of assembly, F-type ATPases have 2 components, F(1) - the catalytic core - and F(0) - the membrane proton channel. F(1) has five subunits: alpha(3), beta(3), gamma(1), delta(1), epsilon(1). F(0) has three main subunits: a(1), b(2) and c(10-14). The alpha and beta chains form an alternating ring which encloses part of the gamma chain. F(1) is attached to F(0) by a central stalk formed by the gamma and epsilon chains, while a peripheral stalk is formed by the delta and b chains.

It is found in the cell inner membrane. Functionally, f(1)F(0) ATP synthase produces ATP from ADP in the presence of a proton or sodium gradient. F-type ATPases consist of two structural domains, F(1) containing the extramembraneous catalytic core and F(0) containing the membrane proton channel, linked together by a central stalk and a peripheral stalk. During catalysis, ATP synthesis in the catalytic domain of F(1) is coupled via a rotary mechanism of the central stalk subunits to proton translocation. In terms of biological role, this protein is part of the stalk that links CF(0) to CF(1). It either transmits conformational changes from CF(0) to CF(1) or is implicated in proton conduction. This is ATP synthase subunit delta from Sulfurihydrogenibium azorense (strain DSM 15241 / OCM 825 / Az-Fu1).